Consider the following 188-residue polypeptide: Peptidyl-tRNA hydrolase (188 aa).

Tyr-14 is a tRNA binding site. Residue His-19 is the Proton acceptor of the active site. TRNA-binding residues include Tyr-64, Asn-66, and Asn-112.

Belongs to the PTH family. Monomer.

The protein resides in the cytoplasm. The enzyme catalyses an N-acyl-L-alpha-aminoacyl-tRNA + H2O = an N-acyl-L-amino acid + a tRNA + H(+). Hydrolyzes ribosome-free peptidyl-tRNAs (with 1 or more amino acids incorporated), which drop off the ribosome during protein synthesis, or as a result of ribosome stalling. Its function is as follows. Catalyzes the release of premature peptidyl moieties from peptidyl-tRNA molecules trapped in stalled 50S ribosomal subunits, and thus maintains levels of free tRNAs and 50S ribosomes. This Clostridium perfringens (strain ATCC 13124 / DSM 756 / JCM 1290 / NCIMB 6125 / NCTC 8237 / Type A) protein is Peptidyl-tRNA hydrolase.